The chain runs to 244 residues: 3-deoxy-manno-octulosonate cytidylyltransferase (244 aa).

The protein belongs to the KdsB family.

It localises to the cytoplasm. The enzyme catalyses 3-deoxy-alpha-D-manno-oct-2-ulosonate + CTP = CMP-3-deoxy-beta-D-manno-octulosonate + diphosphate. It participates in nucleotide-sugar biosynthesis; CMP-3-deoxy-D-manno-octulosonate biosynthesis; CMP-3-deoxy-D-manno-octulosonate from 3-deoxy-D-manno-octulosonate and CTP: step 1/1. Its pathway is bacterial outer membrane biogenesis; lipopolysaccharide biosynthesis. In terms of biological role, activates KDO (a required 8-carbon sugar) for incorporation into bacterial lipopolysaccharide in Gram-negative bacteria. This is 3-deoxy-manno-octulosonate cytidylyltransferase from Flavobacterium johnsoniae (strain ATCC 17061 / DSM 2064 / JCM 8514 / BCRC 14874 / CCUG 350202 / NBRC 14942 / NCIMB 11054 / UW101) (Cytophaga johnsonae).